Reading from the N-terminus, the 427-residue chain is 3-phosphoshikimate 1-carboxyvinyltransferase (427 aa).

3 residues coordinate 3-phosphoshikimate: Lys-23, Ser-24, and Arg-28. Residue Lys-23 participates in phosphoenolpyruvate binding. Residues Gly-97 and Arg-125 each coordinate phosphoenolpyruvate. Ser-169, Ser-170, Gln-171, Ser-197, Asp-313, Asn-336, and Lys-340 together coordinate 3-phosphoshikimate. Gln-171 is a binding site for phosphoenolpyruvate. The Proton acceptor role is filled by Asp-313. 3 residues coordinate phosphoenolpyruvate: Arg-344, Arg-386, and Lys-411.

It belongs to the EPSP synthase family. As to quaternary structure, monomer.

It localises to the cytoplasm. The catalysed reaction is 3-phosphoshikimate + phosphoenolpyruvate = 5-O-(1-carboxyvinyl)-3-phosphoshikimate + phosphate. The protein operates within metabolic intermediate biosynthesis; chorismate biosynthesis; chorismate from D-erythrose 4-phosphate and phosphoenolpyruvate: step 6/7. Its function is as follows. Catalyzes the transfer of the enolpyruvyl moiety of phosphoenolpyruvate (PEP) to the 5-hydroxyl of shikimate-3-phosphate (S3P) to produce enolpyruvyl shikimate-3-phosphate and inorganic phosphate. In Yersinia ruckeri, this protein is 3-phosphoshikimate 1-carboxyvinyltransferase.